The primary structure comprises 123 residues: MTGTGRTVTRVDLCEAVYQKVGLSRTESSAFVELVLKEITDCLEKGETVKLSSFGSFLVRQKGQRIGRNPKTGTEVPISPRRVMVFKPSAILKQRINANGTASSMSSSANAAAGDKSESASGT.

Residues 97–123 (NANGTASSMSSSANAAAGDKSESASGT) form a disordered region. The segment covering 102 to 113 (ASSMSSSANAAA) has biased composition (low complexity).

This sequence belongs to the bacterial histone-like protein family. As to quaternary structure, heterodimer of an alpha and a beta chain.

This protein is one of the two subunits of integration host factor, a specific DNA-binding protein that functions in genetic recombination as well as in transcriptional and translational control. The protein is Integration host factor subunit alpha of Rhodopseudomonas palustris (strain HaA2).